The primary structure comprises 456 residues: RuvB-like 1 (456 aa).

The tract at residues 1-20 (MKIEEVKSTTKTQRIASHSH) is disordered. An ATP-binding site is contributed by 70–77 (GPPGTGKT).

This sequence belongs to the RuvB family. In terms of assembly, forms homohexameric rings. Can form a dodecamer with ruvbl2 made of two stacked hexameric rings. Is a component of the RNA polymerase II holoenzyme complex. Component of the chromatin-remodeling Ino80 complex. Component of some MLL1/MLL complex.

It localises to the nucleus. The protein localises to the dynein axonemal particle. The catalysed reaction is ATP + H2O = ADP + phosphate + H(+). Has single-stranded DNA-stimulated ATPase and ATP-dependent DNA helicase (3' to 5') activity suggesting a role in nuclear processes such as recombination and transcription. Proposed core component of the chromatin remodeling Ino80 complex which exhibits DNA- and nucleosome-activated ATPase activity and catalyzes ATP-dependent nucleosome sliding. May act as a negative regulator of embryonic heart growth. The chain is RuvB-like 1 (ruvbl1) from Danio rerio (Zebrafish).